A 608-amino-acid chain; its full sequence is Nuclear receptor subfamily 2 group C member 1 (608 aa).

Residues 1–179 (MASIEEIAHQ…RLQRCIAFGM (179 aa)) form a required for interaction with KAT2B region. The nuclear receptor DNA-binding region spans 111 to 186 (FDLCVVCGDK…FGMKQDSVQC (76 aa)). 2 consecutive NR C4-type zinc fingers follow at residues 114 to 134 (CVVC…CEGC) and 150 to 169 (CRGS…CQYC). A phosphoserine mark is found at Ser-198 and Ser-216. Thr-221 bears the Phosphothreonine mark. Thr-223 bears the Phosphothreonine; by MAPK1 mark. Lys-251 is covalently cross-linked (Glycyl lysine isopeptide (Lys-Gly) (interchain with G-Cter in SUMO); alternate). Lys-251 is covalently cross-linked (Glycyl lysine isopeptide (Lys-Gly) (interchain with G-Cter in SUMO2); alternate). In terms of domain architecture, NR LBD spans 353-595 (GNVHLIAGDS…SVIPHILKME (243 aa)). Ser-586 carries the phosphoserine; by PKC modification. Residues 589–608 (PHILKMEPADYNSQIIGHSI) are required for interaction with NRIP1. A Glycyl lysine isopeptide (Lys-Gly) (interchain with G-Cter in SUMO2) cross-link involves residue Lys-593.

This sequence belongs to the nuclear hormone receptor family. NR2 subfamily. In terms of assembly, homodimer. Heterodimer; with NR2C2 which is required for chromatin remodeling and for binding to promoter regions such as globin DR1 repeats. Interacts with ESR1; the interaction prevents homodimerization of ESR1 and suppresses its transcriptional activity and cell growth. Interacts with NRIP1 (via its LXXLL motifs); the interaction provides corepressor activity. Interacts with HDAC3 (via the DNA-binding domain); the interaction recruits phosphorylated NR2C1 to PML bodies for sumoylation. Interacts with HDAC4 (via the DNA-binding domain). Interacts with PIAS1; the interaction is required for sumoylation of NR2C1. Interacts with UBE2I; the interaction is required for sumoylation of NR2C1. Interacts with KAT2B; the interaction acts as a corepressor of gene expression. Post-translationally, sumoylation requires both PIAS1 and UBE2I. Sumoylation appears to dissociate NR2C1 from the PML nuclear bodies. Enhances the interaction with NRIP1 but inhibits interaction with KAT2B. In proliferating cells, stimulation by all-trans retinoic acid, activation of MAPK1-mediated phosphorylation and recruitment to PML bodies with subsequent sumoylation, suppresses OCT4 expression. In terms of processing, phosphorylated on several serine and threonine residues. Phosphorylation on Thr-223, stimulated by all-trans retinoic acid (atRA) mediates PML location and sumoylation in proliferating cells which then modulates its association with effector molecules, KAT2B and NRIP1. Phosphorylation on Ser-586 by PKC is important for protein stability and function as activator of RARB.

It localises to the nucleus. The protein localises to the PML body. In terms of biological role, orphan nuclear receptor. Binds the IR7 element in the promoter of its own gene in an autoregulatory negative feedback mechanism. Primarily repressor of a broad range of genes including ESR1 and RARB. Together with NR2C2, forms the core of the DRED (direct repeat erythroid-definitive) complex that represses embryonic and fetal globin transcription. Binds to hormone response elements (HREs) consisting of two 5'-AGGTCA-3' half site direct repeat consensus sequences. Also activator of OCT4 gene expression. Plays a fundamental role in early embryogenesis and regulates embryonic stem cell proliferation and differentiation. Mediator of retinoic acid-regulated preadipocyte proliferation. The sequence is that of Nuclear receptor subfamily 2 group C member 1 (NR2C1) from Bos taurus (Bovine).